A 1269-amino-acid polypeptide reads, in one-letter code: Regulator of nonsense transcripts 2 (1269 aa).

2 disordered regions span residues 1–125 (MPAE…EKEE) and 143–162 (LRSK…FFSR). Residues 57–133 (KKRLEEDKRK…EESLQLHQEA (77 aa)) adopt a coiled-coil conformation. The segment at 94–132 (KKKQEEEERKKQEEQAKRQQEEAAAQLKEKEESLQLHQE) is sufficient for interaction with UPF1. Residues 168–396 (KKNTAFVKKL…KGELSEDRHK (229 aa)) enclose the MIF4G 1 domain. Disordered regions lie at residues 422-444 (NMPD…DIFT) and 487-518 (KSQN…DLEL). Basic and acidic residues-rich tracts occupy residues 427–438 (PQDKPTPEEHGP) and 487–511 (KSQN…KEAS). 2 MIF4G domains span residues 571 to 755 (QQLP…YCNP) and 774 to 984 (RKLL…LRPK). The interval 709–926 (GRFLFRSPES…IRLVCTILDT (218 aa)) is sufficient for interaction with UPF3A and UPF3B. Positions 755-1269 (PPPAEKTVRK…LIFKTGGRRR (515 aa)) are sufficient for interaction with EIF4A1 and EIF1. Positions 837–857 (EDVGIHVVDGVLEDIRLGMEV) are binds to UPF3B. The interval 1017-1090 (SKDSMTEGEN…KENETDEENA (74 aa)) is disordered. The segment covering 1025-1073 (ENLEEDEEEEEGGAETEEQSGNESEVNEPEEEEGSEEEEEGEEEEEENT) has biased composition (acidic residues). A sufficient for interaction with UPF1 C-terminus region spans residues 1081-1269 (KENETDEENA…LIFKTGGRRR (189 aa)). Thr1085 is subject to Phosphothreonine. Interaction with UPF1 stretches follow at residues 1102–1126 (VPCV…QQRS) and 1164–1204 (DTMP…AEQE). A necessary for interaction with UPF1 region spans residues 1102-1195 (VPCVEDEDFI…PMSSQLAANH (94 aa)). A disordered region spans residues 1218-1269 (ERQEQEDYQEMLQSLAQRPAPANTNRERRPRYQHPKGAPNADLIFKTGGRRR).

Found in a post-splicing messenger ribonucleoprotein (mRNP) complex. Associates with the exon junction complex (EJC). Interacts with SMG1, EST1A, UPF3A, UPF3B, EIF4A1 and EIF1. Interacts with UPF1; interaction is promoted by TDRD6. Interacts with DDX4. As to expression, localized in male germ cells.

Its subcellular location is the cytoplasm. The protein localises to the perinuclear region. Functionally, involved in nonsense-mediated decay (NMD) of mRNAs containing premature stop codons by associating with the nuclear exon junction complex (EJC). Recruited by UPF3B associated with the EJC core at the cytoplasmic side of the nuclear envelope and the subsequent formation of an UPF1-UPF2-UPF3 surveillance complex (including UPF1 bound to release factors at the stalled ribosome) is believed to activate NMD. In cooperation with UPF3B stimulates both ATPase and RNA helicase activities of UPF1. Binds spliced mRNA. The chain is Regulator of nonsense transcripts 2 from Mus musculus (Mouse).